The chain runs to 97 residues: Na(+)/H(+) antiporter subunit F1 (97 aa).

Transmembrane regions (helical) follow at residues 3 to 23 (FKIF…AMLI), 35 to 55 (VVAL…FSIL), and 60 to 80 (YMLV…AVFS).

Belongs to the CPA3 antiporters (TC 2.A.63) subunit F family. As to quaternary structure, may form a heterooligomeric complex that consists of seven subunits: mnhA1, mnhB1, mnhC1, mnhD1, mnhE1, mnhF1 and mnhG1.

It localises to the cell membrane. Mnh complex is a Na(+)/H(+) antiporter involved in Na(+) excretion. This Staphylococcus epidermidis (strain ATCC 35984 / DSM 28319 / BCRC 17069 / CCUG 31568 / BM 3577 / RP62A) protein is Na(+)/H(+) antiporter subunit F1 (mnhF1).